Reading from the N-terminus, the 34-residue chain is Photosystem I reaction center subunit XII (34 aa).

Residues 10-32 (IYIALVVAAHAAILALRLSVSLY) form a helical membrane-spanning segment.

This sequence belongs to the PsaM family.

Its subcellular location is the cellular thylakoid membrane. The polypeptide is Photosystem I reaction center subunit XII (Synechococcus sp. (strain RCC307)).